An 85-amino-acid polypeptide reads, in one-letter code: Large ribosomal subunit protein bL27 (85 aa).

Over residues methionine 1–threonine 10 the composition is skewed to gly residues. Positions methionine 1–methionine 20 are disordered.

It belongs to the bacterial ribosomal protein bL27 family.

This is Large ribosomal subunit protein bL27 from Delftia acidovorans (strain DSM 14801 / SPH-1).